Here is a 90-residue protein sequence, read N- to C-terminus: Small ribosomal subunit protein bS16 (90 aa).

The protein belongs to the bacterial ribosomal protein bS16 family.

This is Small ribosomal subunit protein bS16 from Fervidobacterium nodosum (strain ATCC 35602 / DSM 5306 / Rt17-B1).